A 380-amino-acid chain; its full sequence is MGSGCRIECIFFSEFHPTLGPKITYQVPEDFISRELFDTVQVYIITKPELQNKLITVTAMEKKLIGCPVCIEHKKYSRNALLFNLGFVCDAQAKTCALEPIVKKLAGYLTTLELESSFVSMEESKQKLVPIMTILLEELNASGRCTLPIDESNTIHLKVIEQRPDPPVAQEYDVPVFTKDKEDFFNSQWDLTTQQILPYIDGFRHIQKISAEADVELNLVRIAIQNLLYYGVVTLVSILQYSNVYCPTPKVQDLVDDKSLQEACLSYVTKQGHKRASLRDVFQLYCSLSPGTTVRDLIGRHPQQLQHVDERKLIQFGLMKNLIRRLQKYPVRVTREEQSHPARLYTGCHSYDEICCKTGMSYHELDERLENDPNIIICWK.

Residues 1–133 (MGSGCRIECI…SKQKLVPIMT (133 aa)) are interaction with PDPK1. A GDP-binding site is contributed by arginine 78. An Asymmetric dimethylarginine modification is found at arginine 78. Glycyl lysine isopeptide (Lys-Gly) (interchain with G-Cter in ubiquitin) cross-links involve residues lysine 158 and lysine 357.

It belongs to the NPR2 family. Within the GATOR complex, component of the GATOR1 subcomplex, made of DEPDC5, NPRL2 and NPRL3. GATOR1 mediates the strong interaction of the GATOR complex with small GTPases Rag (RagA/RRAGA, RagB/RRAGB, RagC/RRAGC and/or RagD/RRAGD) heterodimers. GATOR1 interacts with GPR155/LYCHOS; interaction takes place in presence of cholesterol and prevents interaction between GATOR1 and KICSTOR. Interacts with PDPK1. In the presence of abundant amino acids, ubiquitinated at Lys-158 and Lys-357 via 'Lys-6'-linked ubiquitination by the WDR24 component of the GATOR2 complex, thereby inhibiting the GATOR1 complex and promoting mTORC1 activation. In terms of processing, asymmetric dimethylation at Arg-78 by PRMT1 inhibits the GTPase activator activity of the GATOR1 complex and consequently inducing timely mTORC1 activation under methionine-sufficient conditions. Most abundant in skeletal muscle, followed by brain, liver and pancreas, with lower amounts in lung, kidney, placenta and heart. Expressed in the frontal lobe cortex as well as in the temporal, parietal, and occipital lobes. Expressed in most lung cancer cell lines tested.

It is found in the lysosome membrane. Catalytic component of the GATOR1 complex, a multiprotein complex that functions as an inhibitor of the amino acid-sensing branch of the mTORC1 pathway. In response to amino acid depletion, the GATOR1 complex has GTPase activating protein (GAP) activity and strongly increases GTP hydrolysis by RagA/RRAGA (or RagB/RRAGB) within heterodimeric Rag complexes, thereby turning them into their inactive GDP-bound form, releasing mTORC1 from lysosomal surface and inhibiting mTORC1 signaling. In the presence of abundant amino acids, the GATOR1 complex is ubiquitinated and inhibited by GATOR2. Within the GATOR1 complex, NPRL2 constitutes the catalytic subunit that mediates the GTPase activator activity and under methionine-sufficient conditions, the GTPase activator activity is inhibited by PRMT1 through methylation and consequently inducing timely mTORC1 activation. In terms of biological role, suppresses Src-dependent tyrosine phosphorylation and activation of PDPK1 and its downstream signaling. Down-regulates PDPK1 kinase activity by interfering with tyrosine phosphorylation at 'Tyr-9', 'Tyr-373' and 'Tyr-376' residues. May act as a tumor suppressor. Suppresses cell growth and enhances sensitivity to various anticancer drugs. This is GATOR1 complex protein NPRL2 from Homo sapiens (Human).